The following is a 209-amino-acid chain: MKKAIIGKKVGMTQIFDENGRVIPVTVVEAGPCVVVQKKTVETDGYDAIQVGFGELREKLVNKPRKGHFAKAGVSLRRTLKEFRMEDVANYNVGDEIKVDTFEIGDKVDVSGVSKGKGFQGTIKRWNASRGPMSHGSKFHRAPGSMGAASDPSRTFKNKRMPGHMGAKNTTVLNLEVVKIMPEKNIILIKGGIPGPNKGTVVIRNSVKA.

Residues 129–153 (SRGPMSHGSKFHRAPGSMGAASDPS) form a disordered region.

The protein belongs to the universal ribosomal protein uL3 family. As to quaternary structure, part of the 50S ribosomal subunit. Forms a cluster with proteins L14 and L19.

Functionally, one of the primary rRNA binding proteins, it binds directly near the 3'-end of the 23S rRNA, where it nucleates assembly of the 50S subunit. This Clostridium perfringens (strain 13 / Type A) protein is Large ribosomal subunit protein uL3.